We begin with the raw amino-acid sequence, 397 residues long: Acetyl-CoA acetyltransferase, cytosolic (397 aa).

M1 is modified (N-acetylmethionine). Residue C92 is the Acyl-thioester intermediate of the active site. K200 is subject to N6-acetyllysine. The CoA site is built by R223 and S226. N6-acetyllysine occurs at positions 233 and 235. S252 serves as a coordination point for CoA. Catalysis depends on C383, which acts as the Proton donor/acceptor.

It belongs to the thiolase-like superfamily. Thiolase family. As to quaternary structure, homotetramer.

Its subcellular location is the cytoplasm. It localises to the cytosol. The enzyme catalyses 2 acetyl-CoA = acetoacetyl-CoA + CoA. The protein operates within lipid metabolism; fatty acid metabolism. Its function is as follows. Involved in the biosynthetic pathway of cholesterol. The sequence is that of Acetyl-CoA acetyltransferase, cytosolic (Acat2) from Mus musculus (Mouse).